The primary structure comprises 346 residues: Phosphoribosylformylglycinamidine cyclo-ligase (346 aa).

Belongs to the AIR synthase family.

It localises to the cytoplasm. It catalyses the reaction 2-formamido-N(1)-(5-O-phospho-beta-D-ribosyl)acetamidine + ATP = 5-amino-1-(5-phospho-beta-D-ribosyl)imidazole + ADP + phosphate + H(+). The protein operates within purine metabolism; IMP biosynthesis via de novo pathway; 5-amino-1-(5-phospho-D-ribosyl)imidazole from N(2)-formyl-N(1)-(5-phospho-D-ribosyl)glycinamide: step 2/2. The sequence is that of Phosphoribosylformylglycinamidine cyclo-ligase from Photobacterium profundum (strain SS9).